The primary structure comprises 271 residues: (21S)-21-acetoxyl-apo-melianone synthase SDR (271 aa).

The active-site Proton donor is serine 150. Catalysis depends on tyrosine 163, which acts as the Proton acceptor. The active-site Proton donor/acceptor is the lysine 167.

It belongs to the short-chain dehydrogenases/reductases (SDR) family. In terms of tissue distribution, mainly expressed in petioles.

The catalysed reaction is 21-O-acetyl-isomeliandiol + A = (21S)-21-acetoxyl-apo-melianone + AH2. The protein operates within secondary metabolite biosynthesis; terpenoid biosynthesis. Functionally, oxidoreductase involved in the biosynthesis of limonoids triterpene natural products such as azadirachtin, an antifeedant widely used as bioinsecticide, and possessing many medicinal applications including anti-tumoral, anti-malarial, anti-rheumatic, antibacterial, anti-inflammatory, anti-pyretic and diuretic effects. Catalyzes the oxidation of 21-O-acetyl-isomeliandiol to (21S)-21-acetoxyl-apo-melianone. The protein is (21S)-21-acetoxyl-apo-melianone synthase SDR of Melia azedarach (Chinaberry tree).